Consider the following 246-residue polypeptide: MGQKINPVSNRLGIIRGWDSNWYGGRKYGETLLEDSRIRQYLNARLAKASVSRIVIERALKLVTITICTARPGMIIGKAGQEVDKLKEELKRITKKDVQINIYEIRKPELDAAIVAENIARQLEGKIAYRRAVKMAIASAMRMGAEGIKIQVSGRLNGAEMARSEMFKEGRTPLHTLRADIDYALAEALTKVGLLGIKVWICKGEVYEKRDLAPNFAVAKNQSRRPNAQGGNNRGGDRNRRRKGNR.

The KH type-2 domain occupies 38–106; it reads IRQYLNARLA…DVQINIYEIR (69 aa). Residues 218–246 form a disordered region; the sequence is VAKNQSRRPNAQGGNNRGGDRNRRRKGNR.

This sequence belongs to the universal ribosomal protein uS3 family. In terms of assembly, part of the 30S ribosomal subunit. Forms a tight complex with proteins S10 and S14.

Functionally, binds the lower part of the 30S subunit head. Binds mRNA in the 70S ribosome, positioning it for translation. This chain is Small ribosomal subunit protein uS3, found in Porphyromonas gingivalis (strain ATCC 33277 / DSM 20709 / CIP 103683 / JCM 12257 / NCTC 11834 / 2561).